A 103-amino-acid polypeptide reads, in one-letter code: Protein RALF-like 18 (103 aa).

An N-terminal signal peptide occupies residues 1–32 (MMNNMKLLIIAVMIISAALLPALVVGSRPVKC). Positions 33–58 (DNCMDGGEKEEIMKMSSGVDVSHRIL) are cleaved as a propeptide — removed in mature form. The cysteines at positions 92 and 98 are disulfide-linked.

Belongs to the plant rapid alkalinization factor (RALF) family. Post-translationally, proteolytically cleaved, probably by S1P, a subtilisin-like serine protease (subtilase).

It is found in the secreted. In terms of biological role, cell signaling peptide that may regulate plant stress, growth, and development. Mediates a rapid alkalinization of extracellular space by mediating a transient increase in the cytoplasmic Ca(2+) concentration leading to a calcium-dependent signaling events through a cell surface receptor and a concomitant activation of some intracellular mitogen-activated protein kinases. This Arabidopsis thaliana (Mouse-ear cress) protein is Protein RALF-like 18 (RALFL18).